Here is an 839-residue protein sequence, read N- to C-terminus: Protein translocase subunit SecA (839 aa).

ATP-binding positions include glutamine 85, 103-107, and aspartate 493; that span reads GEGKT. Residues 780–790 are compositionally biased toward basic and acidic residues; sequence QIHEQERERAS. The tract at residues 780–839 is disordered; that stretch reads QIHEQERERASQRATTAAPQNIQSQQSANTDDLPKVERNEACPCGSGKKFKNCHGRKSFS. The span at 791–809 shows a compositional bias: polar residues; the sequence is QRATTAAPQNIQSQQSANT. Positions 821, 823, 832, and 833 each coordinate Zn(2+). Residues 827-839 show a composition bias toward basic residues; sequence KKFKNCHGRKSFS.

This sequence belongs to the SecA family. Monomer and homodimer. Part of the essential Sec protein translocation apparatus which comprises SecA, SecYEG and auxiliary proteins SecDF. Other proteins may also be involved. Zn(2+) is required as a cofactor.

The protein resides in the cell membrane. It is found in the cytoplasm. The enzyme catalyses ATP + H2O + cellular proteinSide 1 = ADP + phosphate + cellular proteinSide 2.. Part of the Sec protein translocase complex. Interacts with the SecYEG preprotein conducting channel. Has a central role in coupling the hydrolysis of ATP to the transfer of proteins into and across the cell membrane, serving as an ATP-driven molecular motor driving the stepwise translocation of polypeptide chains across the membrane. The sequence is that of Protein translocase subunit SecA from Streptococcus pyogenes serotype M28 (strain MGAS6180).